The sequence spans 490 residues: Protein nucleotidyltransferase YdiU (490 aa).

Residues glycine 86, glycine 88, arginine 89, lysine 109, aspartate 121, glycine 122, arginine 172, and arginine 179 each contribute to the ATP site. Aspartate 248 acts as the Proton acceptor in catalysis. Positions 249 and 258 each coordinate Mg(2+). Aspartate 258 is an ATP binding site.

This sequence belongs to the SELO family. Requires Mg(2+) as cofactor. Mn(2+) serves as cofactor.

The catalysed reaction is L-seryl-[protein] + ATP = 3-O-(5'-adenylyl)-L-seryl-[protein] + diphosphate. It carries out the reaction L-threonyl-[protein] + ATP = 3-O-(5'-adenylyl)-L-threonyl-[protein] + diphosphate. The enzyme catalyses L-tyrosyl-[protein] + ATP = O-(5'-adenylyl)-L-tyrosyl-[protein] + diphosphate. It catalyses the reaction L-histidyl-[protein] + UTP = N(tele)-(5'-uridylyl)-L-histidyl-[protein] + diphosphate. The catalysed reaction is L-seryl-[protein] + UTP = O-(5'-uridylyl)-L-seryl-[protein] + diphosphate. It carries out the reaction L-tyrosyl-[protein] + UTP = O-(5'-uridylyl)-L-tyrosyl-[protein] + diphosphate. In terms of biological role, nucleotidyltransferase involved in the post-translational modification of proteins. It can catalyze the addition of adenosine monophosphate (AMP) or uridine monophosphate (UMP) to a protein, resulting in modifications known as AMPylation and UMPylation. The chain is Protein nucleotidyltransferase YdiU from Rhizobium meliloti (strain 1021) (Ensifer meliloti).